The primary structure comprises 393 residues: NADH-quinone oxidoreductase subunit D (393 aa).

This sequence belongs to the complex I 49 kDa subunit family. NDH-1 is composed of 14 different subunits. Subunits NuoB, C, D, E, F, and G constitute the peripheral sector of the complex.

The protein localises to the cell inner membrane. It carries out the reaction a quinone + NADH + 5 H(+)(in) = a quinol + NAD(+) + 4 H(+)(out). Its function is as follows. NDH-1 shuttles electrons from NADH, via FMN and iron-sulfur (Fe-S) centers, to quinones in the respiratory chain. The immediate electron acceptor for the enzyme in this species is believed to be ubiquinone. Couples the redox reaction to proton translocation (for every two electrons transferred, four hydrogen ions are translocated across the cytoplasmic membrane), and thus conserves the redox energy in a proton gradient. This Ehrlichia ruminantium (strain Welgevonden) protein is NADH-quinone oxidoreductase subunit D.